The primary structure comprises 494 residues: BTB/POZ domain and ankyrin repeat-containing protein NH5.2 (494 aa).

Positions 25–131 (SDVAFSVEGR…LYSGQASVAA (107 aa)) constitute a BTB domain. Positions 60-95 (NHQPPPPPPPPLNWPTAGGGGGGSGGGGRGGAGGGG) are disordered. The span at 61 to 72 (HQPPPPPPPPLN) shows a compositional bias: pro residues. The span at 76-95 (AGGGGGGSGGGGRGGAGGGG) shows a compositional bias: gly residues. The C2HC NPR-type zinc-finger motif lies at 137–151 (LPGCGARGCWHTRCG). The Zn(2+) site is built by cysteine 140, cysteine 145, histidine 147, and cysteine 150. ANK repeat units follow at residues 275 to 303 (NKIR…GLDL), 304 to 334 (DDAL…DVNS), 339 to 368 (TGKT…DPNS), and 372 to 406 (DGVT…KLRL). Disordered stretches follow at residues 421–443 (DDGA…PRSD) and 471–494 (GEGR…NGFA).

This sequence belongs to the plant 'ANKYRIN-BTB/POZ' family. 'NOOT-BOP-COCH-like' (NBCL) subfamily. As to quaternary structure, homodimer. Interacts with TGAL5, TGAL7, TGAL8 and TGAL9.

It is found in the nucleus. The protein resides in the cytoplasm. Its pathway is protein modification; protein ubiquitination. Functionally, may act as a substrate-specific adapter of an E3 ubiquitin-protein ligase complex (CUL3-RBX1-BTB) which mediates the ubiquitination and subsequent proteasomal degradation of target proteins. Transcriptional co-regulator involved in the promotion of leaf and floral meristem fate and determinacy. Required for the abscission of senescent organs, probably by regulating the cell wall disorganization in abscission zones (AZs, e.g. pulvini at the base of leaves). This Oryza sativa subsp. japonica (Rice) protein is BTB/POZ domain and ankyrin repeat-containing protein NH5.2.